A 422-amino-acid chain; its full sequence is Adenylosuccinate synthetase (422 aa).

Residues 11–17 and 39–41 each bind GTP; these read GDEGKGK and GHT. Catalysis depends on Asp12, which acts as the Proton acceptor. Mg(2+)-binding residues include Asp12 and Gly39. IMP is bound by residues 12–15, 37–40, Thr129, Arg143, Asn219, Thr234, and Arg298; these read DEGK and NAGH. The active-site Proton donor is His40. Residue 294–300 coordinates substrate; that stretch reads VTTGRRR. Residues Arg300, 326-328, and 409-411 contribute to the GTP site; these read KLD and GTG.

It belongs to the adenylosuccinate synthetase family. As to quaternary structure, homodimer. Mg(2+) is required as a cofactor.

Its subcellular location is the cytoplasm. The catalysed reaction is IMP + L-aspartate + GTP = N(6)-(1,2-dicarboxyethyl)-AMP + GDP + phosphate + 2 H(+). It participates in purine metabolism; AMP biosynthesis via de novo pathway; AMP from IMP: step 1/2. Plays an important role in the de novo pathway and in the salvage pathway of purine nucleotide biosynthesis. Catalyzes the first committed step in the biosynthesis of AMP from IMP. In Ajellomyces capsulatus (strain NAm1 / WU24) (Darling's disease fungus), this protein is Adenylosuccinate synthetase.